Here is a 691-residue protein sequence, read N- to C-terminus: Seven transmembrane domain-containing tyrosine-protein kinase 1 (691 aa).

Residues 1–33 are Extracellular-facing; it reads MDTSCVSINQCGFCTYLFNRSIPLAGEGDGAIM. The helical transmembrane segment at 34-54 threads the bilayer; the sequence is FNTMVDSMALGYIFSALYLLF. Residues 55-126 lie on the Cytoplasmic side of the membrane; sequence RLQRSYTYLQ…PRIINSTYFK (72 aa). The chain crosses the membrane as a helical span at residues 127–144; the sequence is YTLFVSLWLAFEGLLLLF. Residues 145 to 153 lie on the Extracellular side of the membrane; it reads LPPNSLAYP. The chain crosses the membrane as a helical span at residues 154 to 176; it reads AFVIIVGTGHIVTDNWVLVFLYG. At 177–186 the chain is on the cytoplasmic side; sequence KEDDRFSARR. Residues 187-207 traverse the membrane as a helical segment; the sequence is SFYSCTLLYLIICCTTLASFF. Over 208–227 the chain is Extracellular; that stretch reads DDQTMCKKNDCQTFMFQDEY. A helical membrane pass occupies residues 228-248; the sequence is TSLAITVASLVVYTIVLGMTI. Over 249–258 the chain is Cytoplasmic; sequence KRSFLRPTGR. A helical membrane pass occupies residues 259 to 279; it reads IWLLFLMGYNCISSVGALLNI. The Extracellular segment spans residues 280–284; that stretch reads LDVDA. A helical membrane pass occupies residues 285–305; the sequence is GYCFLGIAAIIYSFSYGPLLF. Topologically, residues 306–691 are cytoplasmic; sequence RTCGNDTNLL…GAEEFHYIDG (386 aa). The Protein kinase domain occupies 363–634; it reads FKFGQVIGEG…ANVPISNTYV (272 aa). ATP contacts are provided by residues 369-377 and Lys-390; that span reads IGEGYFGEV. Asp-493 (proton acceptor) is an active-site residue.

Belongs to the protein kinase superfamily. TKL Tyr protein kinase family.

It localises to the membrane. It catalyses the reaction L-tyrosyl-[protein] + ATP = O-phospho-L-tyrosyl-[protein] + ADP + H(+). The chain is Seven transmembrane domain-containing tyrosine-protein kinase 1 (7tmk1) from Dictyostelium discoideum (Social amoeba).